The sequence spans 47 residues: Putative beta-neurotoxin (47 aa).

Residues 1–47 enclose the LCN-type CS-alpha/beta domain; that stretch reads KEGYMGSDGCKMSCVINDQFCDTECQAKLKGSTGYCYFXGLACYXXG. 2 cysteine pairs are disulfide-bonded: Cys14–Cys36 and Cys21–Cys43.

In terms of tissue distribution, expressed by the venom gland.

It is found in the secreted. Functionally, causes transient paralysis of the rear legs of and spasms in insects (A.domestica). This chain is Putative beta-neurotoxin, found in Rhopalurus junceus (Caribbean blue scorpion).